Reading from the N-terminus, the 692-residue chain is Elongation factor G (692 aa).

Residues Asn-8–Thr-283 form the tr-type G domain. GTP-binding positions include Ala-17–Thr-24, Asp-81–His-85, and Asn-135–Asp-138.

It belongs to the TRAFAC class translation factor GTPase superfamily. Classic translation factor GTPase family. EF-G/EF-2 subfamily.

The protein resides in the cytoplasm. Its function is as follows. Catalyzes the GTP-dependent ribosomal translocation step during translation elongation. During this step, the ribosome changes from the pre-translocational (PRE) to the post-translocational (POST) state as the newly formed A-site-bound peptidyl-tRNA and P-site-bound deacylated tRNA move to the P and E sites, respectively. Catalyzes the coordinated movement of the two tRNA molecules, the mRNA and conformational changes in the ribosome. The sequence is that of Elongation factor G from Helicobacter pylori (strain Shi470).